Here is a 107-residue protein sequence, read N- to C-terminus: Transmembrane protein 213 (107 aa).

The first 27 residues, 1–27 (MQRLPAATRATLILSLAFASLHSACSA), serve as a signal peptide directing secretion. The Extracellular segment spans residues 28–70 (EASSSNSSSLTAHHPDPGTLEQCLNVDFCPQAARCCRTGVDEY). A helical transmembrane segment spans residues 71-91 (GWIAAAVGWSLWFLTLILLCV). At 92–107 (DKLMKLTPDEPKDLQA) the chain is on the cytoplasmic side.

Its subcellular location is the membrane. This Homo sapiens (Human) protein is Transmembrane protein 213 (TMEM213).